Reading from the N-terminus, the 210-residue chain is Cytochrome c biogenesis ATP-binding export protein CcmA (210 aa).

The region spanning 4–208 (VPTLSFSKLG…GAIPAQLLEL (205 aa)) is the ABC transporter domain. 39–46 (GANGVGKT) provides a ligand contact to ATP.

It belongs to the ABC transporter superfamily. CcmA exporter (TC 3.A.1.107) family. The complex is composed of two ATP-binding proteins (CcmA) and two transmembrane proteins (CcmB).

The protein resides in the cell inner membrane. The enzyme catalyses heme b(in) + ATP + H2O = heme b(out) + ADP + phosphate + H(+). Its function is as follows. Part of the ABC transporter complex CcmAB involved in the biogenesis of c-type cytochromes; once thought to export heme, this seems not to be the case, but its exact role is uncertain. Responsible for energy coupling to the transport system. This chain is Cytochrome c biogenesis ATP-binding export protein CcmA, found in Albidiferax ferrireducens (strain ATCC BAA-621 / DSM 15236 / T118) (Rhodoferax ferrireducens).